The following is a 287-amino-acid chain: Nucleotide-binding protein mma_3120 (287 aa).

8 to 15 (GISGSGKS) provides a ligand contact to ATP. 57-60 (DARS) is a GTP binding site.

This sequence belongs to the RapZ-like family.

In terms of biological role, displays ATPase and GTPase activities. This is Nucleotide-binding protein mma_3120 from Janthinobacterium sp. (strain Marseille) (Minibacterium massiliensis).